The primary structure comprises 202 residues: LexA repressor (202 aa).

Catalysis depends on for autocatalytic cleavage activity residues Ser123 and Lys159.

Belongs to the peptidase S24 family. As to quaternary structure, homodimer.

It carries out the reaction Hydrolysis of Ala-|-Gly bond in repressor LexA.. Its function is as follows. Binds the consensus sequence 5'-TGTTC-N(4)-GAACA-3'; some genes have a tandem consensus sequence, at high concentrations their binding is cooperative. Binds to the promoters of a number of genes, including dinB, imuA, lexA, recA, recQ, splB and uvrA. Represses a number of genes involved in the response to DNA damage (SOS response). In the presence of single-stranded DNA, RecA interacts with LexA causing an autocatalytic cleavage which disrupts the DNA-binding part of LexA, leading to derepression of the SOS regulon and eventually DNA repair. This Verrucomicrobium spinosum (strain ATCC 43997 / DSM 4136 / JCM 18804 / IFAM 1439) protein is LexA repressor.